The sequence spans 205 residues: Ribosomal RNA small subunit methyltransferase G (205 aa).

Residues Gly-70, Leu-75, 121–122 (IE), and Arg-136 contribute to the S-adenosyl-L-methionine site.

The protein belongs to the methyltransferase superfamily. RNA methyltransferase RsmG family.

The protein localises to the cytoplasm. It carries out the reaction guanosine(527) in 16S rRNA + S-adenosyl-L-methionine = N(7)-methylguanosine(527) in 16S rRNA + S-adenosyl-L-homocysteine. Specifically methylates the N7 position of guanine in position 527 of 16S rRNA. The chain is Ribosomal RNA small subunit methyltransferase G from Methylococcus capsulatus (strain ATCC 33009 / NCIMB 11132 / Bath).